The sequence spans 630 residues: Pentatricopeptide repeat-containing protein At2g03880, mitochondrial (630 aa).

The transit peptide at 1–76 (MKSVMSKIKL…LIKCCISNRA (76 aa)) directs the protein to the mitochondrion. 11 PPR repeats span residues 60–94 (DSAT…GHRP), 95–125 (MMFL…MPQR), 126–160 (NVIS…NVRP), 161–192 (NVYT…GLES), 193–223 (DVFV…MVTG), 224–258 (DAIV…GFIA), 259–289 (EQAT…IVKY), 292–322 (DLIL…MKER), 323–357 (DVIT…GTKP), 358–388 (NYIT…MKKL), and 394–424 (VREH…MECE). Residues 429 to 504 (TWRTLLGACR…EPGCSWIEVN (76 aa)) form a type E motif region. The tract at residues 505–535 (KQIHAFIIGDNSHPQIVEVSKKLNQLIHRLT) is type E(+) motif. The interval 536–630 (GIGYVPETNF…DGKCSCGDYW (95 aa)) is type DYW motif.

The protein belongs to the PPR family. PCMP-H subfamily.

The protein localises to the mitochondrion. The sequence is that of Pentatricopeptide repeat-containing protein At2g03880, mitochondrial (PCMP-H44) from Arabidopsis thaliana (Mouse-ear cress).